Here is a 237-residue protein sequence, read N- to C-terminus: Phosphoribosylaminoimidazole-succinocarboxamide synthase (237 aa).

This sequence belongs to the SAICAR synthetase family.

It carries out the reaction 5-amino-1-(5-phospho-D-ribosyl)imidazole-4-carboxylate + L-aspartate + ATP = (2S)-2-[5-amino-1-(5-phospho-beta-D-ribosyl)imidazole-4-carboxamido]succinate + ADP + phosphate + 2 H(+). It participates in purine metabolism; IMP biosynthesis via de novo pathway; 5-amino-1-(5-phospho-D-ribosyl)imidazole-4-carboxamide from 5-amino-1-(5-phospho-D-ribosyl)imidazole-4-carboxylate: step 1/2. This is Phosphoribosylaminoimidazole-succinocarboxamide synthase from Sodalis glossinidius (strain morsitans).